The chain runs to 234 residues: GTP cyclohydrolase 1 (234 aa).

Residues 1-26 (MDALIKPLRAGKPDAKPADPKGTEFR) are disordered. Basic and acidic residues predominate over residues 11–26 (GKPDAKPADPKGTEFR). Cys123, His126, and Cys194 together coordinate Zn(2+).

This sequence belongs to the GTP cyclohydrolase I family. In terms of assembly, toroid-shaped homodecamer, composed of two pentamers of five dimers.

It carries out the reaction GTP + H2O = 7,8-dihydroneopterin 3'-triphosphate + formate + H(+). It functions in the pathway cofactor biosynthesis; 7,8-dihydroneopterin triphosphate biosynthesis; 7,8-dihydroneopterin triphosphate from GTP: step 1/1. In Rhodopseudomonas palustris (strain BisB18), this protein is GTP cyclohydrolase 1.